The primary structure comprises 67 residues: DNA-directed RNA polymerase subunit omega (67 aa).

The protein belongs to the RNA polymerase subunit omega family. The RNAP catalytic core consists of 2 alpha, 1 beta, 1 beta' and 1 omega subunit. When a sigma factor is associated with the core the holoenzyme is formed, which can initiate transcription.

It carries out the reaction RNA(n) + a ribonucleoside 5'-triphosphate = RNA(n+1) + diphosphate. Functionally, promotes RNA polymerase assembly. Latches the N- and C-terminal regions of the beta' subunit thereby facilitating its interaction with the beta and alpha subunits. The protein is DNA-directed RNA polymerase subunit omega of Polaromonas sp. (strain JS666 / ATCC BAA-500).